The chain runs to 228 residues: 3,4-dihydroxy-2-butanone 4-phosphate synthase (228 aa).

D-ribulose 5-phosphate contacts are provided by residues 37–38 (RE), D42, 150–154 (RPGHT), and E174. E38 serves as a coordination point for Mg(2+). H153 is a binding site for Mg(2+).

This sequence belongs to the DHBP synthase family. As to quaternary structure, homodimer. Mg(2+) serves as cofactor. The cofactor is Mn(2+).

The catalysed reaction is D-ribulose 5-phosphate = (2S)-2-hydroxy-3-oxobutyl phosphate + formate + H(+). Its pathway is cofactor biosynthesis; riboflavin biosynthesis; 2-hydroxy-3-oxobutyl phosphate from D-ribulose 5-phosphate: step 1/1. Its function is as follows. Catalyzes the conversion of D-ribulose 5-phosphate to formate and 3,4-dihydroxy-2-butanone 4-phosphate. The polypeptide is 3,4-dihydroxy-2-butanone 4-phosphate synthase (Chloroherpeton thalassium (strain ATCC 35110 / GB-78)).